A 294-amino-acid polypeptide reads, in one-letter code: Glycine N-acyltransferase-like protein 2 (294 aa).

K19 is subject to N6-acetyllysine.

Belongs to the glycine N-acyltransferase family. In terms of processing, acetylation at Lys-19 drastically decreases the production of N-oleoyl and N-arachidonoyl glycines. Expressed at highest levels in salivary gland and trachea. Also detected in thyroid gland, spinal cord, prostate, lung and fetal brain.

It is found in the endoplasmic reticulum. It catalyses the reaction an acyl-CoA + glycine = an N-acylglycine + CoA + H(+). The enzyme catalyses (9Z)-hexadecenoyl-CoA + glycine = N-(9Z-hexadecenoyl)-glycine + CoA + H(+). The catalysed reaction is octadecanoyl-CoA + glycine = N-octadecanoylglycine + CoA + H(+). It carries out the reaction (5Z,8Z,11Z,14Z)-eicosatetraenoyl-CoA + glycine = N-(5Z,8Z,11Z,14Z)-eicosatetraenoyl-glycine + CoA + H(+). It catalyses the reaction (9Z)-octadecenoyl-CoA + glycine = N-(9Z-octadecenoyl)glycine + CoA + H(+). The enzyme catalyses octanoyl-CoA + glycine = N-octanoylglycine + CoA + H(+). The catalysed reaction is decanoyl-CoA + glycine = N-decanoylglycine + CoA + H(+). It carries out the reaction tetradecanoyl-CoA + glycine = N-tetradecanoylglycine + CoA + H(+). It catalyses the reaction dodecanoyl-CoA + glycine = N-dodecanoylglycine + CoA + H(+). The enzyme catalyses (9Z,12Z)-octadecadienoyl-CoA + glycine = N-(9Z,12Z-octadecadienoyl)-glycine + CoA + H(+). The catalysed reaction is a fatty acyl-CoA + glycine = an N-(fatty acyl)-glycine + CoA + H(+). Its function is as follows. Mitochondrial acyltransferase which transfers the acyl group to the N-terminus of glycine. Conjugates numerous substrates, such as arachidonoyl-CoA and saturated medium and long-chain acyl-CoAs ranging from chain-length C8:0-CoA to C18:0-CoA, to form a variety of N-acylglycines. Shows a preference for monounsaturated fatty acid oleoyl-CoA (C18:1-CoA) as an acyl donor. Does not exhibit any activity toward C22:6-CoA and chenodeoxycholoyl-CoA, nor toward serine or alanine. In Homo sapiens (Human), this protein is Glycine N-acyltransferase-like protein 2.